The following is a 308-amino-acid chain: tRNA pseudouridine synthase B (308 aa).

Asp-44 acts as the Nucleophile in catalysis.

Belongs to the pseudouridine synthase TruB family. Type 1 subfamily.

It carries out the reaction uridine(55) in tRNA = pseudouridine(55) in tRNA. Its function is as follows. Responsible for synthesis of pseudouridine from uracil-55 in the psi GC loop of transfer RNAs. The protein is tRNA pseudouridine synthase B of Nitratidesulfovibrio vulgaris (strain DSM 19637 / Miyazaki F) (Desulfovibrio vulgaris).